Reading from the N-terminus, the 222-residue chain is Dual specificity phosphatase 29 (222 aa).

The Tyrosine-protein phosphatase domain maps to 54 to 202 (HVNEVWPKLY…LRELDKQLVQ (149 aa)). 146–153 (HCAMGRSR) provides a ligand contact to substrate. Residue C147 is the Phosphocysteine intermediate of the active site. The disordered stretch occupies residues 201-222 (VQQRRGAQHRGEAGEKAGEKEP). The segment covering 209–222 (HRGEAGEKAGEKEP) has biased composition (basic and acidic residues).

It belongs to the protein-tyrosine phosphatase family. Non-receptor class dual specificity subfamily. Homodimer. Interacts with PRKAA2.

The protein localises to the cytoplasm. The protein resides in the nucleus. The enzyme catalyses O-phospho-L-tyrosyl-[protein] + H2O = L-tyrosyl-[protein] + phosphate. It carries out the reaction O-phospho-L-seryl-[protein] + H2O = L-seryl-[protein] + phosphate. It catalyses the reaction O-phospho-L-threonyl-[protein] + H2O = L-threonyl-[protein] + phosphate. Dual specificity phosphatase able to dephosphorylate phosphotyrosine, phosphoserine and phosphothreonine residues within the same substrate, with a preference for phosphotyrosine as a substrate. Involved in the modulation of intracellular signaling cascades. In skeletal muscle regulates systemic glucose homeostasis by activating, AMPK, an energy sensor protein kinase. Affects MAP kinase signaling though modulation of the MAPK1/2 cascade in skeletal muscle promoting muscle cell differentiation, development and atrophy. This Sus scrofa (Pig) protein is Dual specificity phosphatase 29 (DUSP29).